Here is a 423-residue protein sequence, read N- to C-terminus: 3-phosphoshikimate 1-carboxyvinyltransferase (423 aa).

Residues lysine 28, serine 29, and arginine 33 each coordinate 3-phosphoshikimate. Residue lysine 28 coordinates phosphoenolpyruvate. Phosphoenolpyruvate contacts are provided by glycine 96 and arginine 124. 3-phosphoshikimate is bound by residues serine 169, serine 170, glutamine 171, serine 198, glutamate 312, and histidine 339. Residue glutamine 171 coordinates phosphoenolpyruvate. The Proton acceptor role is filled by glutamate 312. Phosphoenolpyruvate is bound by residues arginine 343, arginine 384, and lysine 409.

The protein belongs to the EPSP synthase family. In terms of assembly, monomer.

Its subcellular location is the cytoplasm. It carries out the reaction 3-phosphoshikimate + phosphoenolpyruvate = 5-O-(1-carboxyvinyl)-3-phosphoshikimate + phosphate. It participates in metabolic intermediate biosynthesis; chorismate biosynthesis; chorismate from D-erythrose 4-phosphate and phosphoenolpyruvate: step 6/7. Its function is as follows. Catalyzes the transfer of the enolpyruvyl moiety of phosphoenolpyruvate (PEP) to the 5-hydroxyl of shikimate-3-phosphate (S3P) to produce enolpyruvyl shikimate-3-phosphate and inorganic phosphate. The protein is 3-phosphoshikimate 1-carboxyvinyltransferase of Acidothermus cellulolyticus (strain ATCC 43068 / DSM 8971 / 11B).